We begin with the raw amino-acid sequence, 184 residues long: Putative axial regulator YABBY 2 (184 aa).

A C4-type zinc finger spans residues 15–42 (CSFCTTILAVSVPYASLFTLVTVRCGHC). 2 stretches are compositionally biased toward polar residues: residues 76–94 (LVTR…NLSE) and 171–184 (LDQS…NGYY). Disordered stretches follow at residues 76-115 (LVTR…RQRV) and 162-184 (LDGN…NGYY).

The protein belongs to the YABBY family. Interacts with SPL/NZZ and SPEAR2. In terms of tissue distribution, expressed at low levels in abaxial regions of lateral aerial organ primordia leading to cotyledons, leaves, flower meristems, sepals, petals, stamen and carpels, but not in roots.

It localises to the nucleus. Functionally, involved in the abaxial cell fate determination during embryogenesis and organogenesis. This chain is Putative axial regulator YABBY 2 (YAB2), found in Arabidopsis thaliana (Mouse-ear cress).